The primary structure comprises 588 residues: MHPLRCVLQVQRLSAPFTSMCWVLLRTCRAQSSVSSTPCPSPEAKSSEAQKDFSSRLATGPTFQHFLRSASVPQEKPSSPEVEDPPPYLSGDELLGRQRKVYLETYGCQMNVNDTEIAWSILQKSGYLRTSNLQEADVILLVTCSIREKAEQTIWNRLHQLKVLKTKRPRSRVPLRIGILGCMAERLKGEILNREKMVDLLAGPDAYRDLPRLLAVVESGQQAANVLLSLDETYADIMPVQTSPSATSAFVSIMRGCDNMCSYCIVPFTRGRERSRPVASILDEVRKLSEQGLKEVTLLGQNVNSFRDNSEVQFNNAGSANLSRGFTTNYKPKQGGLRFSHLLDQVSRIDPEMRIRFTSPHPKDFPDEVLQLIRERHNICKQIHLPAQSGSSRVLDAMRRGYSREAYVALVHHVRETIPGVSLSSDFITGFCGETEDDHRQTVSLLREVQYNTGFLFAYSMRQKTRAYHRLKDDVPEEVKLRRLEELITVFREEASKANKTSVGCSQLVLVEGFSKRSTTDLCGRNDANLKVIFPDAEVEDITNPGLKVRAQPGDYVLVKITSASSQTLKGHILCRTTMKDSLTYCTT.

A mitochondrion-targeting transit peptide spans 1-30; sequence MHPLRCVLQVQRLSAPFTSMCWVLLRTCRA. 2 disordered regions span residues 33-53 and 70-91; these read SVSS…QKDF and ASVP…YLSG. The 121-residue stretch at 99–219 folds into the MTTase N-terminal domain; sequence RKVYLETYGC…LPRLLAVVES (121 aa). Cysteine 108, cysteine 144, cysteine 182, cysteine 257, cysteine 261, and cysteine 264 together coordinate [4Fe-4S] cluster. The 256-residue stretch at 243-498 folds into the Radical SAM core domain; it reads SPSATSAFVS…TVFREEASKA (256 aa). The region spanning 500–575 is the TRAM domain; sequence KTSVGCSQLV…SQTLKGHILC (76 aa).

It belongs to the methylthiotransferase family. MiaB subfamily. Interacts with CDK5R1 (p35 form). CDK5RAP1, CDK5RAP2 and CDK5RAP3 show competitive binding to CDK5R1. Probably forms a complex with CDK5R1 and CDK5. The cofactor is [4Fe-4S] cluster. In terms of tissue distribution, expressed in brain, liver, skeletal muscle and heart.

The protein resides in the mitochondrion. The catalysed reaction is N(6)-dimethylallyladenosine(37) in tRNA + (sulfur carrier)-SH + AH2 + 2 S-adenosyl-L-methionine = 2-methylsulfanyl-N(6)-dimethylallyladenosine(37) in tRNA + (sulfur carrier)-H + 5'-deoxyadenosine + L-methionine + A + S-adenosyl-L-homocysteine + 2 H(+). In terms of biological role, methylthiotransferase that catalyzes the conversion of N6-(dimethylallyl)adenosine (i(6)A) to 2-methylthio-N6-(dimethylallyl)adenosine (ms(2)i(6)A) at position 37 (adjacent to the 3'-end of the anticodon) of four mitochondrial DNA-encoded tRNAs (Ser(UCN), Phe, Tyr and Trp). Essential for efficient and highly accurate protein translation by the ribosome. Specifically inhibits CDK5 activation by CDK5R1. Essential for efficient mitochondrial protein synthesis and respiratory chain. This Mus musculus (Mouse) protein is Mitochondrial tRNA methylthiotransferase CDK5RAP1.